The primary structure comprises 663 residues: Probable receptor-like protein kinase At1g49730 (663 aa).

An N-terminal signal peptide occupies residues 1–25 (MVVNSQAFLLALIALLATQLPSLMA). At 26-254 (ADCPLDFSGS…TNPYHLTMVP (229 aa)) the chain is on the extracellular side. 5 N-linked (GlcNAc...) asparagine glycosylation sites follow: Asn-36, Asn-46, Asn-70, Asn-101, and Asn-171. A disordered region spans residues 213–243 (SFSPVASPEPSPSTVGGISPSNSDSQMTTSR). Residues 224–243 (PSTVGGISPSNSDSQMTTSR) are compositionally biased toward polar residues. A helical membrane pass occupies residues 255–275 (TIGIVVTAVALTMLVVLVILI). The Cytoplasmic segment spans residues 276-663 (RRKNRELDES…PHSPINGFSF (388 aa)). A Protein kinase domain is found at 327–609 (NDFNTVIGQG…ESCDPVHSAF (283 aa)). Residues 333-341 (IGQGGFGTV) and Lys-355 each bind ATP. The active-site Proton acceptor is the Asp-451. Residues 631 to 663 (RGDSRIFGPSSSTTSRSHYSRSLPHSPINGFSF) form a disordered region. Positions 640–652 (SSSTTSRSHYSRS) are enriched in low complexity.

Belongs to the protein kinase superfamily. Ser/Thr protein kinase family.

The protein localises to the cell membrane. The enzyme catalyses L-seryl-[protein] + ATP = O-phospho-L-seryl-[protein] + ADP + H(+). It catalyses the reaction L-threonyl-[protein] + ATP = O-phospho-L-threonyl-[protein] + ADP + H(+). This chain is Probable receptor-like protein kinase At1g49730, found in Arabidopsis thaliana (Mouse-ear cress).